Consider the following 319-residue polypeptide: Cobalamin biosynthesis protein CobD (319 aa).

Transmembrane regions (helical) follow at residues 56–76, 153–173, 204–224, and 290–310; these read GLWI…LWLM, VDGV…LAMA, LANW…AWFI, and IPLS…LFAL.

The protein belongs to the CobD/CbiB family.

The protein resides in the cell membrane. It functions in the pathway cofactor biosynthesis; adenosylcobalamin biosynthesis. Converts cobyric acid to cobinamide by the addition of aminopropanol on the F carboxylic group. The sequence is that of Cobalamin biosynthesis protein CobD from Photorhabdus laumondii subsp. laumondii (strain DSM 15139 / CIP 105565 / TT01) (Photorhabdus luminescens subsp. laumondii).